The sequence spans 297 residues: Probable esterase afoC (297 aa).

The active-site Charge relay system is Ser-136. Low complexity predominate over residues 204–217 (ASSSASASVSGSES). Positions 204–226 (ASSSASASVSGSESAGEEEEDGH) are disordered. Catalysis depends on charge relay system residues Asp-240 and His-267.

It belongs to the LovG family.

In terms of biological role, probable esterase; part of the gene cluster that mediates the biosynthesis of asperfuranone, a probable antitumor agent. The polyketide synthase afoG is responsible for producing the 3,5-dimethyloctadienone moiety from acetyl-CoA, three malonyl-CoA, and two S-adenosyl methionines (SAM). The 3,5-dimethyloctadienone moiety is then loaded onto the SAT domain of afoE and extended with four malonyl-CoA and one SAM, which leads to the formation of 2,4-dihydroxy-6-(5,7-dimethyl-2-oxo-trans-3-trans-5-nonadienyl)-3-methylbenzaldehyde (compound 2) after reductive release and aldol condensation. AfoD is the next enzyme in the biosynthesis sequence and hydroxylates the side chain at the benzylic position of compound 2. After benzylic hydroxylation, a furan ring is formed after five-member ring hemiacetal formation and water elimination. AfoF and afoC are proposed to oxidize the R-diketone proton and to reduce the unconjugated carbonyl group, respectively, to generate asperfuranone. Since no intermediates could be isolated from afoF and afoC deletants, the sequence of these two enzymes is not fully understood. Moreover, since afoC deletant still produces a small amount of asperfuranone, other endogenous oxidoreductases might catalyze the same reaction with much less efficiency. The chain is Probable esterase afoC from Emericella nidulans (strain FGSC A4 / ATCC 38163 / CBS 112.46 / NRRL 194 / M139) (Aspergillus nidulans).